A 1105-amino-acid polypeptide reads, in one-letter code: Ran-binding protein 6 (1105 aa).

A2 is subject to N-acetylalanine. HEAT repeat units lie at residues 219–257 (FKDFADLLPGILQAVNDSCYQDDDSVLESLVEIADTVPK), 361–399 (KVVLPMTKEHIMQMLQSPDWKCRHAGLMALSAIGEGCHQ), 402–440 (EPILDETVNSVLLFLQDPHPRVRAAACTTLGQMATDFAP), 444–483 (KKFHEIVITALLRTMENQGNQRVQSHAASALVIFIEDCPK), 866–905 (LPWFEQLLPLIVNLICSSRPWPDRQWGLCIFDDIIEHCSP), 908–946 (FKYVEYFRWPMLLNMRDNNPEVRQAAAYGLGVMAQFGGD), and 949–987 (RSLCSEAVPLLVKVIKCANSKTKKNVIATENCISAIGKI).

It belongs to the importin beta family.

It is found in the cytoplasm. The protein resides in the nucleus. Functionally, may function in nuclear protein import as nuclear transport receptor. This chain is Ran-binding protein 6 (Ranbp6), found in Mus musculus (Mouse).